The sequence spans 351 residues: Porphobilinogen deaminase (351 aa).

S-(dipyrrolylmethanemethyl)cysteine is present on C242. The RPE1 insert domain occupies 257-306 (PRHLSKLAYREVLEGNTEALATAAYKSNRTDASTGLTYKLPLEVEFGKVS).

This sequence belongs to the HMBS family. As to quaternary structure, monomer. Requires dipyrromethane as cofactor.

It catalyses the reaction 4 porphobilinogen + H2O = hydroxymethylbilane + 4 NH4(+). It functions in the pathway porphyrin-containing compound metabolism; protoporphyrin-IX biosynthesis; coproporphyrinogen-III from 5-aminolevulinate: step 2/4. Its function is as follows. Tetrapolymerization of the monopyrrole PBG into the hydroxymethylbilane pre-uroporphyrinogen in several discrete steps. This is Porphobilinogen deaminase from Rickettsia conorii (strain ATCC VR-613 / Malish 7).